An 883-amino-acid polypeptide reads, in one-letter code: MNEQYSALRSNVSMLGKVLGETIKDALGEHILDRVETIRKLSKSSRAGNEANRQELLTTLQNLSNDELLPVARAFSQFLNLANTAEQYHSISPKGEAASNPEVIARTLRKLKNQPDLNDATIKKAVESLSLELVLTAHPTEITRRTLIHKMGEINNCLKQLDNTDIADYERHQVMRRLRQLIAQSWHTDEIRKQRPSPVDEAKWGFAVVENSLWQGVPNYLRELNEQLEENLGYKLPVDFVPVRFTSWMGGDRDGNPNVTADITRHVLLLSRWKATDLFLKDIHVLVSELSMVEATPELLALVGEEGASEPYRYLMKKLRARLMATQSWLEARLKGEKLPKPDGLLTQNEQLWEPLYACYQSLQACGMGIIANGELLDTLRRVKCFGVPLVRIDIRQESTRHTEALGEITRYLGIGDYESWSEADKQAFLIRELNSKRPLLPRNWEPSNDTREVLETCKVIAEAPKGSIAAYVISMAKTPSDVLAVHLLLKEAGIGFAMPVAPLFETLDDLNNADDVMTQLLNIDWYRGLIQGKQMVMIGYSDSAKDAGVMAASWAQYQAQDALIKTCEKAGIELTLFHGRGGSIGRGGAPAHAALLSQPPGSLKGGLRVTEQGEMIRFKYGLPEVTVSSLSLYTSAILEANLLPPPEPKDSWRHIMDELSVISCETYRGYVRENKDFVPYFRSATPEQELGKLPLGSRPAKRRPTGGVESLRAIPWIFAWTQNRLMLPAWLGAGTALQKVVEDGKQSELEAMCRDWPFFSTRLGMLEMVFSKADLWLADYYDQRLVAKTLWPLGKELRDLLEEDIKVVLAIANDSHLMADLPWIAESIQLRNVYTDPLNVLQAELLYRSRLTEEQGKSPDPRVEQALMVTIAGVAAGMRNTG.

Active-site residues include histidine 138 and lysine 546.

Belongs to the PEPCase type 1 family. Mg(2+) serves as cofactor.

The catalysed reaction is oxaloacetate + phosphate = phosphoenolpyruvate + hydrogencarbonate. In terms of biological role, forms oxaloacetate, a four-carbon dicarboxylic acid source for the tricarboxylic acid cycle. The sequence is that of Phosphoenolpyruvate carboxylase from Salmonella arizonae (strain ATCC BAA-731 / CDC346-86 / RSK2980).